We begin with the raw amino-acid sequence, 1891 residues long: TATA-binding protein-associated factor mot1 (1891 aa).

One copy of the HEAT 1 repeat lies at 30–68 (PDELFNLLGRILPYLRSKSWDTRAAAAKAIGLIVANADT). Disordered stretches follow at residues 184-216 (FVASREHSIQGTSQPLASPIEPANGEESGLSKR), 241-283 (LSSR…LDRS), and 295-316 (FKGASVPENPLLQPESTEEGPN). A compositionally biased stretch (basic and acidic residues) spans 264–275 (ENGEERNGDSKP). HEAT repeat units lie at residues 473-511 (SKLMDGVLEAVMKGLGDYDDDVRAVSAATLVPIAEEFVK) and 569-606 (SSFGKLVPRLYPFLRHTITSVRSAVLRALMTFLQLEGE). A compositionally biased stretch (low complexity) spans 699–710 (SAAAPARSSPAS). Positions 699-740 (SAAAPARSSPASNTPEGTKGRRRKSEKKEAPPPSAHNVDGHM) are disordered. HEAT repeat units lie at residues 957 to 996 (PKKPSHIIKGMMDSIKKEENAELQQRSATAITSLVEYYTT), 1139 to 1177 (YPWVVDLLPLVVKALQCNLSVIRYAAAKCFATICSVITV), 1181 to 1216 (TMLVEKVLPMINDALDVHHRQGAVECIYHLIHVMED), and 1219 to 1257 (LPYVIFLVVPVLGRMSDSDNEVRLLATTSFATLVKLVPL). A Helicase ATP-binding domain is found at 1316–1489 (AFLNRYNLHG…WSLFDFLMPG (174 aa)). 1329-1336 (DDMGLGKT) contributes to the ATP binding site. Residues 1440 to 1443 (DEGH) carry the DEAH box motif. An HEAT 8 repeat occupies 1526–1565 (EALHKQVLPFLLRRLKEEVLNDLPPKIIQNYYCDPSELQR). The Helicase C-terminal domain maps to 1663–1813 (DLSGASYVSP…STVVNQQNAG (151 aa)).

This sequence belongs to the SNF2/RAD54 helicase family. As to quaternary structure, forms the NCT transcriptional regulatory complex with nctA and nctB.

The protein localises to the nucleus. Its function is as follows. Regulates transcription in association with TATA binding protein (TBP). Removes TBP from the TATA box via its C-terminal ATPase activity. Both transcription activation and repression require its ATPase activity. Part of the NCT transcriptional regulatory complex that acts as a key regulator of ergosterol biosynthesis and the azole exporter cdr1B. The NCT complex binds the promoters of genes linked to azole susceptibility, and especially represses the expression of cdr1B transporter. The polypeptide is TATA-binding protein-associated factor mot1 (Aspergillus fumigatus (strain ATCC MYA-4609 / CBS 101355 / FGSC A1100 / Af293) (Neosartorya fumigata)).